Here is a 372-residue protein sequence, read N- to C-terminus: Methenyltetrahydrofolate synthase domain-containing protein (372 aa).

Positions 246-258 are enriched in basic and acidic residues; that stretch reads KQAGKDVTLRDEP. The interval 246 to 289 is disordered; it reads KQAGKDVTLRDEPGSQQPAPGPIRRPQDRPQTGSRGGSRSPLQG. One can recognise an RRM domain in the interval 296-369; the sequence is ATVCVGNLPF…NALRVSLGQQ (74 aa).

This Mus musculus (Mouse) protein is Methenyltetrahydrofolate synthase domain-containing protein (Mthfsd).